Here is a 205-residue protein sequence, read N- to C-terminus: Ribosomal RNA small subunit methyltransferase G (205 aa).

S-adenosyl-L-methionine is bound by residues glycine 73, leucine 78, 124–125, and arginine 139; that span reads VE.

This sequence belongs to the methyltransferase superfamily. RNA methyltransferase RsmG family.

The protein localises to the cytoplasm. It catalyses the reaction guanosine(527) in 16S rRNA + S-adenosyl-L-methionine = N(7)-methylguanosine(527) in 16S rRNA + S-adenosyl-L-homocysteine. In terms of biological role, specifically methylates the N7 position of guanine in position 527 of 16S rRNA. This is Ribosomal RNA small subunit methyltransferase G from Methylobacillus flagellatus (strain ATCC 51484 / DSM 6875 / VKM B-1610 / KT).